Reading from the N-terminus, the 183-residue chain is Holliday junction branch migration complex subunit RuvA (183 aa).

The domain I stretch occupies residues 1–63 (MIVGLIGVVE…EDAHLLYGFL (63 aa)). The tract at residues 64 to 139 (EEGEKILFER…FFIQDENRPA (76 aa)) is domain II. Position 139 (Ala-139) is a region of interest, flexible linker. A domain III region spans residues 139–183 (ARNEVFLALESLGFKSAEINQVLKTLKPNLSIEAAIKEALQQLRS).

The protein belongs to the RuvA family. Homotetramer. Forms an RuvA(8)-RuvB(12)-Holliday junction (HJ) complex. HJ DNA is sandwiched between 2 RuvA tetramers; dsDNA enters through RuvA and exits via RuvB. An RuvB hexamer assembles on each DNA strand where it exits the tetramer. Each RuvB hexamer is contacted by two RuvA subunits (via domain III) on 2 adjacent RuvB subunits; this complex drives branch migration. In the full resolvosome a probable DNA-RuvA(4)-RuvB(12)-RuvC(2) complex forms which resolves the HJ.

It is found in the cytoplasm. Functionally, the RuvA-RuvB-RuvC complex processes Holliday junction (HJ) DNA during genetic recombination and DNA repair, while the RuvA-RuvB complex plays an important role in the rescue of blocked DNA replication forks via replication fork reversal (RFR). RuvA specifically binds to HJ cruciform DNA, conferring on it an open structure. The RuvB hexamer acts as an ATP-dependent pump, pulling dsDNA into and through the RuvAB complex. HJ branch migration allows RuvC to scan DNA until it finds its consensus sequence, where it cleaves and resolves the cruciform DNA. This Helicobacter pylori (strain ATCC 700392 / 26695) (Campylobacter pylori) protein is Holliday junction branch migration complex subunit RuvA.